A 205-amino-acid chain; its full sequence is Dr1-associated corepressor (205 aa).

The Histone-fold domain maps to 14-77 (PARIKKIMQT…SHLKQCIELE (64 aa)). The tract at residues 91–205 (PDMQGDGEDN…EAEDEEDYDS (115 aa)) is disordered. A compositionally biased stretch (basic and acidic residues) spans 98–108 (EDNHTDGDKGP). Over residues 138-155 (SEQEDESEDTDTDGEEET) the composition is skewed to acidic residues. A compositionally biased stretch (pro residues) spans 172 to 193 (PPTPFMPFTSPLPLPPAPPGPS). The segment covering 196 to 205 (EAEDEEDYDS) has biased composition (acidic residues).

This sequence belongs to the NC2 alpha/DRAP1 family. Heterodimer with DR1. Binds BTAF1. Phosphorylation reduces DNA binding, but has no effect on heterodimerization and TBP binding.

It is found in the nucleus. The association of the DR1/DRAP1 heterodimer with TBP results in a functional repression of both activated and basal transcription of class II genes. This interaction precludes the formation of a transcription-competent complex by inhibiting the association of TFIIA and/or TFIIB with TBP. Can bind to DNA on its own. The chain is Dr1-associated corepressor from Rattus norvegicus (Rat).